Reading from the N-terminus, the 416-residue chain is UDP-N-acetylmuramoylalanine--D-glutamate ligase (416 aa).

104 to 110 (GSNGKST) lines the ATP pocket.

It belongs to the MurCDEF family.

It localises to the cytoplasm. The catalysed reaction is UDP-N-acetyl-alpha-D-muramoyl-L-alanine + D-glutamate + ATP = UDP-N-acetyl-alpha-D-muramoyl-L-alanyl-D-glutamate + ADP + phosphate + H(+). It participates in cell wall biogenesis; peptidoglycan biosynthesis. Its function is as follows. Cell wall formation. Catalyzes the addition of glutamate to the nucleotide precursor UDP-N-acetylmuramoyl-L-alanine (UMA). The polypeptide is UDP-N-acetylmuramoylalanine--D-glutamate ligase (Francisella tularensis subsp. holarctica (strain FTNF002-00 / FTA)).